The sequence spans 379 residues: Homoserine O-succinyltransferase (379 aa).

An AB hydrolase-1 domain is found at 48-357; the sequence is NAVLICHALS…SAHGHDAFLM (310 aa). Residue Ser154 is the Nucleophile of the active site. Arg224 contacts substrate. Catalysis depends on residues Asp319 and His352. Asp353 lines the substrate pocket.

Belongs to the AB hydrolase superfamily. MetX family. Homodimer.

It localises to the cytoplasm. The catalysed reaction is L-homoserine + succinyl-CoA = O-succinyl-L-homoserine + CoA. Its pathway is amino-acid biosynthesis; L-methionine biosynthesis via de novo pathway; O-succinyl-L-homoserine from L-homoserine: step 1/1. Its function is as follows. Transfers a succinyl group from succinyl-CoA to L-homoserine, forming succinyl-L-homoserine. This chain is Homoserine O-succinyltransferase, found in Neisseria meningitidis serogroup B (strain ATCC BAA-335 / MC58).